The sequence spans 411 residues: Floricaula/leafy-like protein (411 aa).

Residues 220 to 259 (PDTNYGSEQTKACKKQKRRRSKDSGEDGEERQREHPFIVT) form a disordered region. Residues 231-240 (ACKKQKRRRS) show a composition bias toward basic residues. Residues 241-255 (KDSGEDGEERQREHP) show a composition bias toward basic and acidic residues. 3 consecutive DNA-binding regions follow at residues 252 to 256 (REHPF), 321 to 328 (NKPKMRHY), and 392 to 395 (YVPT).

This sequence belongs to the FLO/LFY family. Expressed in vegetative buds and male cones but not in female cones, vascular tissue, roots or secondary needles.

The protein localises to the nucleus. Probable transcription factor. This Pinus radiata (Monterey pine) protein is Floricaula/leafy-like protein (FLL).